Consider the following 506-residue polypeptide: Maturase K (506 aa).

It belongs to the intron maturase 2 family. MatK subfamily.

It localises to the plastid. It is found in the chloroplast. In terms of biological role, usually encoded in the trnK tRNA gene intron. Probably assists in splicing its own and other chloroplast group II introns. This is Maturase K from Mimosa pudica (Sensitive plant).